A 192-amino-acid chain; its full sequence is Phosphomevalonate kinase (192 aa).

ATP contacts are provided by residues 17–23 (KRKSGKD) and arginine 141. Position 170 (asparagine 170) interacts with substrate. Positions 171 and 180 each coordinate ATP.

In terms of assembly, monomer.

It localises to the cytoplasm. It is found in the cytosol. It catalyses the reaction (R)-5-phosphomevalonate + ATP = (R)-5-diphosphomevalonate + ADP. Its pathway is isoprenoid biosynthesis; isopentenyl diphosphate biosynthesis via mevalonate pathway; isopentenyl diphosphate from (R)-mevalonate: step 2/3. Functionally, catalyzes the reversible ATP-dependent phosphorylation of mevalonate 5-phosphate to produce mevalonate diphosphate and ADP, a key step in the mevalonic acid mediated biosynthesis of isopentenyl diphosphate and other polyisoprenoid metabolites. This Bos taurus (Bovine) protein is Phosphomevalonate kinase (PMVK).